The sequence spans 287 residues: Ribonuclease Z (287 aa).

Residues His64, His66, Asp68, His69, His124, Asp191, and His250 each contribute to the Zn(2+) site. Asp68 serves as the catalytic Proton acceptor.

This sequence belongs to the RNase Z family. In terms of assembly, homodimer. It depends on Zn(2+) as a cofactor.

It catalyses the reaction Endonucleolytic cleavage of RNA, removing extra 3' nucleotides from tRNA precursor, generating 3' termini of tRNAs. A 3'-hydroxy group is left at the tRNA terminus and a 5'-phosphoryl group is left at the trailer molecule.. Zinc phosphodiesterase, which displays some tRNA 3'-processing endonuclease activity. Probably involved in tRNA maturation, by removing a 3'-trailer from precursor tRNA. The protein is Ribonuclease Z of Pyrobaculum aerophilum (strain ATCC 51768 / DSM 7523 / JCM 9630 / CIP 104966 / NBRC 100827 / IM2).